Consider the following 202-residue polypeptide: Holliday junction resolvase RecU (202 aa).

Mg(2+) contacts are provided by Thr85, Asp87, Glu100, and Gln119.

This sequence belongs to the RecU family. The cofactor is Mg(2+).

It is found in the cytoplasm. The enzyme catalyses Endonucleolytic cleavage at a junction such as a reciprocal single-stranded crossover between two homologous DNA duplexes (Holliday junction).. Functionally, endonuclease that resolves Holliday junction intermediates in genetic recombination. Cleaves mobile four-strand junctions by introducing symmetrical nicks in paired strands. Promotes annealing of linear ssDNA with homologous dsDNA. Required for DNA repair, homologous recombination and chromosome segregation. This chain is Holliday junction resolvase RecU, found in Streptococcus uberis (strain ATCC BAA-854 / 0140J).